We begin with the raw amino-acid sequence, 271 residues long: Shikimate dehydrogenase (NADP(+)) (271 aa).

Residues 14–16 and threonine 61 each bind shikimate; that span reads SLS. The active-site Proton acceptor is the lysine 65. Shikimate-binding residues include asparagine 86 and aspartate 101. Residues 125 to 129 and isoleucine 212 each bind NADP(+); that span reads GAGGA. Tyrosine 214 lines the shikimate pocket. Glycine 235 is a binding site for NADP(+).

The protein belongs to the shikimate dehydrogenase family. In terms of assembly, homodimer.

The catalysed reaction is shikimate + NADP(+) = 3-dehydroshikimate + NADPH + H(+). Its pathway is metabolic intermediate biosynthesis; chorismate biosynthesis; chorismate from D-erythrose 4-phosphate and phosphoenolpyruvate: step 4/7. Functionally, involved in the biosynthesis of the chorismate, which leads to the biosynthesis of aromatic amino acids. Catalyzes the reversible NADPH linked reduction of 3-dehydroshikimate (DHSA) to yield shikimate (SA). In Clostridium perfringens (strain SM101 / Type A), this protein is Shikimate dehydrogenase (NADP(+)).